A 203-amino-acid polypeptide reads, in one-letter code: Small ribosomal subunit protein uS4 (203 aa).

Residues 1 to 46 (MSKRQSAKYKLDRRMGENIWGRPKSPVNRREYGPGQHGQRRKGKMS) are disordered. An S4 RNA-binding domain is found at 94-157 (RRLDAVVYRA…QEMALVAEAQ (64 aa)).

This sequence belongs to the universal ribosomal protein uS4 family. In terms of assembly, part of the 30S ribosomal subunit. Contacts protein S5. The interaction surface between S4 and S5 is involved in control of translational fidelity.

One of the primary rRNA binding proteins, it binds directly to 16S rRNA where it nucleates assembly of the body of the 30S subunit. In terms of biological role, with S5 and S12 plays an important role in translational accuracy. This chain is Small ribosomal subunit protein uS4, found in Sphingopyxis alaskensis (strain DSM 13593 / LMG 18877 / RB2256) (Sphingomonas alaskensis).